The chain runs to 152 residues: MASKQLSREELDEKAKQGETVVPGGTGGHSLEAQEHLAEGRSKGGQTRKEQLGHEGYQEIGHKGGEARKEQLGHEGYQEMGHKGGEARKEQLGHEGYQEMGHKGGEARKEQLGHEGYKEMGRKGGLSTMEKSGGERAEEEGIEIDESKFTNK.

2 stretches are compositionally biased toward basic and acidic residues: residues 1–17 and 32–63; these read MASK…KAKQ and EAQE…IGHK. Positions 1–63 are disordered; it reads MASKQLSREE…HEGYQEIGHK (63 aa). 4 repeat units span residues 44–63, 64–83, 84–103, and 104–123. A 4 X 20 AA tandem repeats region spans residues 44–123; it reads GGQTRKEQLG…HEGYKEMGRK (80 aa). A disordered region spans residues 116-152; that stretch reads GYKEMGRKGGLSTMEKSGGERAEEEGIEIDESKFTNK.

Belongs to the small hydrophilic plant seed protein family. As to expression, in seeds only. Specifically located to vascular bundles in the cotyledon and axis of the dry seed. Also found in the epiderm and outer layers of the cortex in the embryo axis.

In terms of biological role, it is thought to provide protection for the cytoplasm during the desiccation stage of embryo development. The protein is Em-like protein GEA1 (EM1) of Arabidopsis thaliana (Mouse-ear cress).